The primary structure comprises 339 residues: Dihydroorotate dehydrogenase (quinone) (339 aa).

Residues 62-66 (AGLDK) and Thr86 contribute to the FMN site. Substrate is bound at residue Lys66. A substrate-binding site is contributed by 111-115 (NRMGF). 2 residues coordinate FMN: Asn139 and Asn172. A substrate-binding site is contributed by Asn172. Catalysis depends on Ser175, which acts as the Nucleophile. Residue Asn177 participates in substrate binding. FMN is bound by residues Lys217 and Thr245. Residue 246–247 (NT) participates in substrate binding. Residues Gly268, Gly297, and 318 to 319 (YS) each bind FMN.

Belongs to the dihydroorotate dehydrogenase family. Type 2 subfamily. Monomer. Requires FMN as cofactor.

Its subcellular location is the cell membrane. The catalysed reaction is (S)-dihydroorotate + a quinone = orotate + a quinol. The protein operates within pyrimidine metabolism; UMP biosynthesis via de novo pathway; orotate from (S)-dihydroorotate (quinone route): step 1/1. Catalyzes the conversion of dihydroorotate to orotate with quinone as electron acceptor. This is Dihydroorotate dehydrogenase (quinone) from Shewanella frigidimarina (strain NCIMB 400).